The following is a 512-amino-acid chain: 2,3-bisphosphoglycerate-independent phosphoglycerate mutase (512 aa).

Positions 11 and 61 each coordinate Mn(2+). The active-site Phosphoserine intermediate is the S61. Residues H122, 152 to 153 (RD), R184, R190, 259 to 262 (RADR), and K332 contribute to the substrate site. Mn(2+) is bound by residues D399, H403, D440, H441, and H459.

Belongs to the BPG-independent phosphoglycerate mutase family. Monomer. Mn(2+) serves as cofactor.

The catalysed reaction is (2R)-2-phosphoglycerate = (2R)-3-phosphoglycerate. It functions in the pathway carbohydrate degradation; glycolysis; pyruvate from D-glyceraldehyde 3-phosphate: step 3/5. Catalyzes the interconversion of 2-phosphoglycerate and 3-phosphoglycerate. The polypeptide is 2,3-bisphosphoglycerate-independent phosphoglycerate mutase (Francisella tularensis subsp. tularensis (strain WY96-3418)).